Consider the following 440-residue polypeptide: Murein DD-endopeptidase MepM (440 aa).

A helical transmembrane segment spans residues 21-40 (VMLGSLTVLTLAVAVWRPYV). Residues 96-141 (HEYVVSTGDTLSSILNQYGIDMGDITQLAAADKELRNLKIGQQLSW) enclose the LysM domain. His-314 is a binding site for Zn(2+).

The protein belongs to the peptidase M23B family. The cofactor is Zn(2+).

The protein localises to the cell membrane. It functions in the pathway cell wall biogenesis; cell wall polysaccharide biosynthesis. In terms of biological role, a murein DD-endopeptidase with specificity for D-Ala-meso-diaminopimelic acid (mDAP) cross-links. Its role is probably to cleave D-Ala-mDAP cross-links to allow insertion of new glycans and thus cell wall expansion. Functionally redundant with MepM and MepH. The chain is Murein DD-endopeptidase MepM (mepM) from Escherichia coli O6:H1 (strain CFT073 / ATCC 700928 / UPEC).